The sequence spans 239 residues: Vesicle-associated protein 1-2 (239 aa).

At M1 the chain carries N-acetylmethionine. Topologically, residues 1–215 are cytoplasmic; the sequence is MSNELLTIDP…RRESKRSKSG (215 aa). N-acetylserine; in Vesicle-associated protein 1-2, N-terminally processed is present on S2. Positions 5–125 constitute an MSP domain; that stretch reads LLTIDPVDLQ…EETKLRVVYV (121 aa). The tract at residues 123 to 174 is disordered; it reads VYVAPPRPPSPVREGSEEGSSPRASVSDNGNASDFTAAPRFSADRVDAQDNS. At S132 the chain carries Phosphoserine. Over residues 140–156 the composition is skewed to polar residues; sequence EGSSPRASVSDNGNASD. Phosphoserine is present on S164. The stretch at 169–215 forms a coiled coil; that stretch reads DAQDNSSEARALVTKLTEEKNSAVQLNNRLQQELDQLRRESKRSKSG. Residues 216 to 236 traverse the membrane as a helical; Anchor for type IV membrane protein segment; it reads GIPFMYVLLVGLIGLILGYIM.

This sequence belongs to the VAMP-associated protein (VAP) (TC 9.B.17) family. Interacts with ORP3A. Binds to VLG at the endomembrane system.

The protein resides in the endoplasmic reticulum membrane. Vesicle-associated protein that binds the oxysterol-binding protein ORP3A and allows its targeting to the ER. This Arabidopsis thaliana (Mouse-ear cress) protein is Vesicle-associated protein 1-2.